The sequence spans 249 residues: Pleckstrin homology domain-containing family F member 2 (249 aa).

Ser-16 is subject to Phosphoserine. Residues 35-131 (VLIGEGVLTK…WMNHINKCVT (97 aa)) enclose the PH domain. Lys-44 carries the post-translational modification N6-acetyllysine. The FYVE-type zinc-finger motif lies at 152–212 (DSEATVCMRC…ICDFCYDLLS (61 aa)). Residues Cys-158, Cys-161, Cys-175, Cys-178, Cys-183, Cys-186, Cys-204, and Cys-207 each coordinate Zn(2+). Positions 221-233 (PTRSDSYSQSLKS) are enriched in polar residues. Residues 221–249 (PTRSDSYSQSLKSPLNDASDDDDDDDSSD) form a disordered region. Residues 238 to 249 (ASDDDDDDDSSD) show a composition bias toward acidic residues. Phosphoserine is present on residues Ser-239 and Ser-248.

May interact with EEA1. In terms of tissue distribution, expressed in brain, stomach and thymus, as well as in kidney, spleen, and skeletal muscle. Also expressed in peripheral blood mononuclear cells and dendritic cells.

It localises to the early endosome membrane. The protein localises to the endoplasmic reticulum. In terms of biological role, may play a role in early endosome fusion upstream of RAB5, hence regulating receptor trafficking and fluid-phase transport. Enhances cellular sensitivity to TNF-induced apoptosis. This Mus musculus (Mouse) protein is Pleckstrin homology domain-containing family F member 2 (Plekhf2).